We begin with the raw amino-acid sequence, 275 residues long: Probable endonuclease lcl3 (275 aa).

Residues 1–25 are disordered; that stretch reads MRWPPWASNTQASNNDHPTTTNNND. Low complexity predominate over residues 14–25; sequence NNDHPTTTNNND. A helical membrane pass occupies residues 41 to 57; it reads LIPTLVLTTGILSAFTL. In terms of domain architecture, TNase-like spans 79–247; that stretch reads RSILGKVTSV…KARGLGLWKG (169 aa). The active site involves Arg130. A Ca(2+)-binding site is contributed by Asp135. Residues Glu138 and Arg178 contribute to the active site.

The protein belongs to the LCL3 family.

It localises to the mitochondrion. It is found in the membrane. This Aspergillus niger (strain ATCC MYA-4892 / CBS 513.88 / FGSC A1513) protein is Probable endonuclease lcl3 (lcl3).